We begin with the raw amino-acid sequence, 291 residues long: Beta-lactamase Toho-1 (291 aa).

The N-terminal stretch at 1 to 29 (MMTQSIRRSMLTVMATLPLLFSSATLHAQ) is a signal peptide. Ser-73 serves as the catalytic Acyl-ester intermediate. 237–239 (KTG) serves as a coordination point for substrate.

The protein belongs to the class-A beta-lactamase family. As to quaternary structure, monomer.

The catalysed reaction is a beta-lactam + H2O = a substituted beta-amino acid. In terms of biological role, has strong cefotaxime-hydrolyzing activity. This is Beta-lactamase Toho-1 (bla) from Escherichia coli.